The sequence spans 471 residues: Mixed lineage kinase domain-like protein (471 aa).

Positions 1–149 (MENLKHIITL…DADEDRRAFQ (149 aa)) are N-terminal bundle and brace (NBB); mediates INSP6 binding. A coiled-coil region spans residues 55–84 (SEKLTTAMNRFKAALEEANGEIEKFSNRSN). Ser-125 bears the Phosphoserine mark. A coiled-coil region spans residues 139 to 180 (QDADEDRRAFQMLRRDNEKIEASLRRLEINMKEIKETLRQYL). In terms of domain architecture, Protein kinase spans 194-469 (KEIKKEQLSG…DEILKKLSTF (276 aa)). ATP is bound by residues 209 to 217 (LRENEVSTL) and Lys-230. Thr-357 is subject to Phosphothreonine; by RIPK3. Ser-358 and Ser-360 each carry phosphoserine; by RIPK3.

It belongs to the protein kinase superfamily. As to quaternary structure, homooligomer. Homotrimer; forms homotrimers on necroptosis induction. Upon TNF-induced necrosis, forms in complex with PGAM5, RIPK1 and RIPK3. Within this complex, may play a role in the proper targeting of RIPK1-RIPK3 to its downstream effector PGAM5. Interacts with RIPK3; the interaction is direct and promotes its phosphorylation and subsequent activation. Phosphorylation by RIPK3 induces a conformational switch that is required for necroptosis. It also induces homotrimerization and localization to the plasma membrane.

The protein resides in the cytoplasm. The protein localises to the cell membrane. Its subcellular location is the nucleus. With respect to regulation, activated via binding to highly phosphorylated inositol phosphates such as inositolhexakisphosphate (InsP6) which mediates the release of an N-terminal auto-inhibitory region. Activation requires not only RIPK3-dependent phosphorylation but also binding to highly phosphorylated inositol phosphates. Inhibited by necrosulfonamide, a specific inhibitor of necroptosis that targets Cys-86. Functionally, pseudokinase that plays a key role in TNF-induced necroptosis, a programmed cell death process. Does not have protein kinase activity. Activated following phosphorylation by RIPK3, leading to homotrimerization, localization to the plasma membrane and execution of programmed necrosis characterized by calcium influx and plasma membrane damage. In addition to TNF-induced necroptosis, necroptosis can also take place in the nucleus in response to orthomyxoviruses infection: following activation by ZBP1, MLKL is phosphorylated by RIPK3 in the nucleus, triggering disruption of the nuclear envelope and leakage of cellular DNA into the cytosol.following ZBP1 activation, which senses double-stranded Z-RNA structures, nuclear RIPK3 catalyzes phosphorylation and activation of MLKL, promoting disruption of the nuclear envelope and leakage of cellular DNA into the cytosol. Binds to highly phosphorylated inositol phosphates such as inositolhexakisphosphate (InsP6) which is essential for its necroptotic function. The chain is Mixed lineage kinase domain-like protein from Homo sapiens (Human).